The sequence spans 333 residues: Glyceraldehyde-3-phosphate dehydrogenase (333 aa).

Residues 11–12, Asp32, and Arg77 contribute to the NAD(+) site; that span reads RI. D-glyceraldehyde 3-phosphate-binding positions include 148–150, Thr179, 208–209, and Arg231; these read SCT and TG. Cys149 serves as the catalytic Nucleophile. Position 313 (Asn313) interacts with NAD(+).

It belongs to the glyceraldehyde-3-phosphate dehydrogenase family. In terms of assembly, homotetramer.

It localises to the cytoplasm. The catalysed reaction is D-glyceraldehyde 3-phosphate + phosphate + NAD(+) = (2R)-3-phospho-glyceroyl phosphate + NADH + H(+). It participates in carbohydrate degradation; glycolysis; pyruvate from D-glyceraldehyde 3-phosphate: step 1/5. The sequence is that of Glyceraldehyde-3-phosphate dehydrogenase (Gapdh) from Glossina morsitans morsitans (Savannah tsetse fly).